The sequence spans 496 residues: Glutathione reductase, cytosolic (496 aa).

6 residues coordinate FAD: Ser32, Gly33, Glu52, Thr69, Cys70, and Lys78. Ser32 lines the glutathione pocket. Residues Cys70 and Cys75 are joined by a disulfide bond. Tyr127 lines the glutathione pocket. Gly143 contacts FAD. Gly208, Ile211, Glu214, Arg231, Arg237, and Gly294 together coordinate NADP(+). Residues Asp335 and Thr343 each contribute to the FAD site. An NADP(+)-binding site is contributed by Ala373. His469 serves as a coordination point for FAD. The active-site Proton acceptor is His469.

The protein belongs to the class-I pyridine nucleotide-disulfide oxidoreductase family. Homodimer. FAD is required as a cofactor.

It localises to the cytoplasm. The catalysed reaction is 2 glutathione + NADP(+) = glutathione disulfide + NADPH + H(+). Functionally, catalyzes the reduction of glutathione disulfide (GSSG) to reduced glutathione (GSH). Constitutes the major mechanism to maintain a high GSH:GSSG ratio in the cytosol. This chain is Glutathione reductase, cytosolic (GRC2), found in Oryza sativa subsp. japonica (Rice).